A 555-amino-acid polypeptide reads, in one-letter code: Synaptotagmin-14 (555 aa).

Topologically, residues 1–24 are extracellular; that stretch reads MAIEGGERTCGVHELICIRKVSPE. Residues 25–47 traverse the membrane as a helical; Signal-anchor for type III membrane protein segment; the sequence is AVGFLSAVGVFIILMLLLFLYIN. The Cytoplasmic portion of the chain corresponds to 48 to 555; that stretch reads KKFCFENVGG…VCRWHALLES (508 aa). Disordered regions lie at residues 157–179 and 222–257; these read TPPL…HLSC and GYEE…DPEP. C2 domains lie at 260-379 and 415-550; these read KYGT…SLPV and SVPE…CRWH.

Belongs to the synaptotagmin family. As to quaternary structure, homodimer. Can also form heterodimers. Highly expressed in fetal and adult brain tissue.

The protein localises to the membrane. In terms of biological role, may be involved in the trafficking and exocytosis of secretory vesicles in non-neuronal tissues. Is Ca(2+)-independent. The chain is Synaptotagmin-14 (SYT14) from Homo sapiens (Human).